Reading from the N-terminus, the 368-residue chain is UDP-N-acetylglucosamine--N-acetylmuramyl-(pentapeptide) pyrophosphoryl-undecaprenol N-acetylglucosamine transferase (368 aa).

UDP-N-acetyl-alpha-D-glucosamine is bound by residues Thr-10–Gly-12, Asn-126, Ser-200, Ile-255, and Gln-300.

It belongs to the glycosyltransferase 28 family. MurG subfamily.

The protein resides in the cell membrane. The catalysed reaction is Mur2Ac(oyl-L-Ala-gamma-D-Glu-L-Lys-D-Ala-D-Ala)-di-trans,octa-cis-undecaprenyl diphosphate + UDP-N-acetyl-alpha-D-glucosamine = beta-D-GlcNAc-(1-&gt;4)-Mur2Ac(oyl-L-Ala-gamma-D-Glu-L-Lys-D-Ala-D-Ala)-di-trans,octa-cis-undecaprenyl diphosphate + UDP + H(+). The protein operates within cell wall biogenesis; peptidoglycan biosynthesis. Its function is as follows. Cell wall formation. Catalyzes the transfer of a GlcNAc subunit on undecaprenyl-pyrophosphoryl-MurNAc-pentapeptide (lipid intermediate I) to form undecaprenyl-pyrophosphoryl-MurNAc-(pentapeptide)GlcNAc (lipid intermediate II). In Lactobacillus helveticus (strain DPC 4571), this protein is UDP-N-acetylglucosamine--N-acetylmuramyl-(pentapeptide) pyrophosphoryl-undecaprenol N-acetylglucosamine transferase.